A 417-amino-acid chain; its full sequence is Glucose-1-phosphate adenylyltransferase (417 aa).

Residues Y98, G163, 178–179, and S197 contribute to the alpha-D-glucose 1-phosphate site; that span reads EK.

The protein belongs to the bacterial/plant glucose-1-phosphate adenylyltransferase family. Homotetramer.

It carries out the reaction alpha-D-glucose 1-phosphate + ATP + H(+) = ADP-alpha-D-glucose + diphosphate. Its pathway is glycan biosynthesis; glycogen biosynthesis. Its function is as follows. Involved in the biosynthesis of ADP-glucose, a building block required for the elongation reactions to produce glycogen. Catalyzes the reaction between ATP and alpha-D-glucose 1-phosphate (G1P) to produce pyrophosphate and ADP-Glc. This chain is Glucose-1-phosphate adenylyltransferase, found in Koribacter versatilis (strain Ellin345).